We begin with the raw amino-acid sequence, 322 residues long: Elongation factor P--(R)-beta-lysine ligase (322 aa).

Position 72–74 (serine 72–glutamate 74) interacts with substrate. Residues arginine 96–asparagine 98 and asparagine 106 each bind ATP. Tyrosine 115 provides a ligand contact to substrate. Glutamate 241 to leucine 242 serves as a coordination point for ATP. Glutamate 248 contacts substrate. Glycine 297 is an ATP binding site.

The protein belongs to the class-II aminoacyl-tRNA synthetase family. EpmA subfamily. As to quaternary structure, homodimer.

The enzyme catalyses D-beta-lysine + L-lysyl-[protein] + ATP = N(6)-((3R)-3,6-diaminohexanoyl)-L-lysyl-[protein] + AMP + diphosphate + H(+). Functionally, with EpmB is involved in the beta-lysylation step of the post-translational modification of translation elongation factor P (EF-P). Catalyzes the ATP-dependent activation of (R)-beta-lysine produced by EpmB, forming a lysyl-adenylate, from which the beta-lysyl moiety is then transferred to the epsilon-amino group of a conserved specific lysine residue in EF-P. This is Elongation factor P--(R)-beta-lysine ligase from Buchnera aphidicola subsp. Baizongia pistaciae (strain Bp).